The primary structure comprises 212 residues: MNSKDCVVIGIAGASASGKSLIAKTIYEELCRDLGTDQIGVIAEDAYYRDQGHLSMDQRVLTNYDHPKALDHELLCTHLRALKQGHAVDIPVYSYNDHTRTDEKVTLTPKKVIILEGILLLTDPALRKEMDASVFMDTPLDICFMRRLSRDVAERGRTMESVMQQYTETVRPMFLQFIEPSKQYADIIVPRGGKNRIATDILKARIQHLLAK.

ATP is bound at residue Gly13 to Ser20.

It belongs to the uridine kinase family.

It localises to the cytoplasm. The catalysed reaction is uridine + ATP = UMP + ADP + H(+). The enzyme catalyses cytidine + ATP = CMP + ADP + H(+). Its pathway is pyrimidine metabolism; CTP biosynthesis via salvage pathway; CTP from cytidine: step 1/3. It functions in the pathway pyrimidine metabolism; UMP biosynthesis via salvage pathway; UMP from uridine: step 1/1. In Shewanella halifaxensis (strain HAW-EB4), this protein is Uridine kinase.